The sequence spans 128 residues: Lutropin subunit beta (128 aa).

Disulfide bonds link C18-C66, C32-C81, C35-C119, C43-C97, C47-C99, and C102-C109. N-linked (GlcNAc...) asparagine glycosylation occurs at N22.

This sequence belongs to the glycoprotein hormones subunit beta family. Heterodimer of a common alpha chain and a unique beta chain which confers biological specificity to thyrotropin, lutropin, follitropin and gonadotropin.

It is found in the secreted. Promotes spermatogenesis and ovulation by stimulating the testes and ovaries to synthesize steroids. This is Lutropin subunit beta (LHB) from Struthio camelus (Common ostrich).